Here is a 204-residue protein sequence, read N- to C-terminus: Cytochrome c biogenesis ATP-binding export protein CcmA (204 aa).

Residues 3-204 form the ABC transporter domain; the sequence is LSGHGLRCVR…ARELRIGGTT (202 aa). 35-42 lines the ATP pocket; that stretch reads GPNGAGKT.

It belongs to the ABC transporter superfamily. CcmA exporter (TC 3.A.1.107) family. The complex is composed of two ATP-binding proteins (CcmA) and two transmembrane proteins (CcmB).

It localises to the cell inner membrane. The catalysed reaction is heme b(in) + ATP + H2O = heme b(out) + ADP + phosphate + H(+). In terms of biological role, part of the ABC transporter complex CcmAB involved in the biogenesis of c-type cytochromes; once thought to export heme, this seems not to be the case, but its exact role is uncertain. Responsible for energy coupling to the transport system. This Nitrobacter hamburgensis (strain DSM 10229 / NCIMB 13809 / X14) protein is Cytochrome c biogenesis ATP-binding export protein CcmA.